We begin with the raw amino-acid sequence, 606 residues long: 1-deoxy-D-xylulose-5-phosphate synthase (606 aa).

Residues H63 and 104 to 106 each bind thiamine diphosphate; that span reads GHS. D137 lines the Mg(2+) pocket. Thiamine diphosphate is bound by residues 138–139, N166, Y273, and E354; that span reads GS. N166 is a Mg(2+) binding site.

The protein belongs to the transketolase family. DXPS subfamily. Homodimer. Mg(2+) is required as a cofactor. Thiamine diphosphate serves as cofactor.

The enzyme catalyses D-glyceraldehyde 3-phosphate + pyruvate + H(+) = 1-deoxy-D-xylulose 5-phosphate + CO2. The protein operates within metabolic intermediate biosynthesis; 1-deoxy-D-xylulose 5-phosphate biosynthesis; 1-deoxy-D-xylulose 5-phosphate from D-glyceraldehyde 3-phosphate and pyruvate: step 1/1. Functionally, catalyzes the acyloin condensation reaction between C atoms 2 and 3 of pyruvate and glyceraldehyde 3-phosphate to yield 1-deoxy-D-xylulose-5-phosphate (DXP). The chain is 1-deoxy-D-xylulose-5-phosphate synthase from Sulfurimonas denitrificans (strain ATCC 33889 / DSM 1251) (Thiomicrospira denitrificans (strain ATCC 33889 / DSM 1251)).